Here is a 51-residue protein sequence, read N- to C-terminus: Sec-independent protein translocase protein TatA (51 aa).

Residues 1–21 (MGMSFSHLLIILLIIFVLFGA) form a helical membrane-spanning segment.

Belongs to the TatA/E family. As to quaternary structure, the Tat system comprises two distinct complexes: a TatABC complex, containing multiple copies of TatA, TatB and TatC subunits, and a separate TatA complex, containing only TatA subunits. Substrates initially bind to the TatABC complex, which probably triggers association of the separate TatA complex to form the active translocon.

It is found in the cell inner membrane. Its function is as follows. Part of the twin-arginine translocation (Tat) system that transports large folded proteins containing a characteristic twin-arginine motif in their signal peptide across membranes. TatA could form the protein-conducting channel of the Tat system. In Rickettsia bellii (strain RML369-C), this protein is Sec-independent protein translocase protein TatA.